Here is a 314-residue protein sequence, read N- to C-terminus: Homoserine O-succinyltransferase (314 aa).

Catalysis depends on C142, which acts as the Acyl-thioester intermediate. The substrate site is built by K163 and S192. The active-site Proton acceptor is H235. The active site involves E237. Substrate is bound at residue R249.

Belongs to the MetA family.

The protein localises to the cytoplasm. It catalyses the reaction L-homoserine + succinyl-CoA = O-succinyl-L-homoserine + CoA. It participates in amino-acid biosynthesis; L-methionine biosynthesis via de novo pathway; O-succinyl-L-homoserine from L-homoserine: step 1/1. Transfers a succinyl group from succinyl-CoA to L-homoserine, forming succinyl-L-homoserine. This is Homoserine O-succinyltransferase from Shewanella woodyi (strain ATCC 51908 / MS32).